Reading from the N-terminus, the 360-residue chain is RNA-binding protein 1 (360 aa).

In terms of domain architecture, RRM 1 spans 6 to 82; sequence YKLFVGGIAK…KPVDVRKAIR (77 aa). The stretch at 93 to 113 forms a coiled coil; sequence MQFLERKVQQMNGGLREMSSN. One can recognise an RRM 2 domain in the interval 120–197; sequence KKIFVGGLSS…KRVEVKRAIP (78 aa).

In terms of tissue distribution, highly expressed in inflorescences and roots. Detected in leaves and seedlings, but not in stems. Expressed in vegetative shoot apex and root meristem, but not in root cap. Detected in flower buds, junction of pedicels, joints of immature siliques and pistil.

In terms of biological role, RNA binding protein. Can also bind in vitro to single-stranded DNA. In Arabidopsis thaliana (Mouse-ear cress), this protein is RNA-binding protein 1 (RBP1).